The primary structure comprises 177 residues: Adenine phosphoribosyltransferase (177 aa).

Belongs to the purine/pyrimidine phosphoribosyltransferase family. Homodimer.

Its subcellular location is the cytoplasm. It carries out the reaction AMP + diphosphate = 5-phospho-alpha-D-ribose 1-diphosphate + adenine. The protein operates within purine metabolism; AMP biosynthesis via salvage pathway; AMP from adenine: step 1/1. Functionally, catalyzes a salvage reaction resulting in the formation of AMP, that is energically less costly than de novo synthesis. The polypeptide is Adenine phosphoribosyltransferase (Chlorobium limicola (strain DSM 245 / NBRC 103803 / 6330)).